A 341-amino-acid chain; its full sequence is Tetraacyldisaccharide 4'-kinase (341 aa).

64–71 (AVGGSGKT) provides a ligand contact to ATP.

This sequence belongs to the LpxK family.

It carries out the reaction a lipid A disaccharide + ATP = a lipid IVA + ADP + H(+). The protein operates within glycolipid biosynthesis; lipid IV(A) biosynthesis; lipid IV(A) from (3R)-3-hydroxytetradecanoyl-[acyl-carrier-protein] and UDP-N-acetyl-alpha-D-glucosamine: step 6/6. Its function is as follows. Transfers the gamma-phosphate of ATP to the 4'-position of a tetraacyldisaccharide 1-phosphate intermediate (termed DS-1-P) to form tetraacyldisaccharide 1,4'-bis-phosphate (lipid IVA). The polypeptide is Tetraacyldisaccharide 4'-kinase (Azoarcus sp. (strain BH72)).